The primary structure comprises 389 residues: Cytochrome b (389 aa).

4 helical membrane-spanning segments follow: residues 32–52 (FGSLLALCLIIQILTGCFLAM), 76–98 (YILRYTHANVASFFFIFIYVHIG), 113–133 (LWSIGVIILVLMMAIGFLGYV), and 179–199 (FFSLHYILPFVLAALAVAHMI). 2 residues coordinate heme b: histidine 82 and histidine 96. The heme b site is built by histidine 183 and histidine 197. An a ubiquinone-binding site is contributed by histidine 202. Transmembrane regions (helical) follow at residues 225 to 245 (FIFKDLVTIFAFFLVLSIIVF), 289 to 309 (LLGVLAMFGSLLILLIMPFVD), 322 to 342 (INMVFFTIFVCNFITLGLVGA), and 349 to 369 (FIFLGQVCTTIYFAYFFVIVP).

Belongs to the cytochrome b family. As to quaternary structure, fungal cytochrome b-c1 complex contains 10 subunits; 3 respiratory subunits, 2 core proteins and 5 low-molecular weight proteins. Cytochrome b-c1 complex is a homodimer. The cofactor is heme b.

It is found in the mitochondrion inner membrane. Functionally, component of the ubiquinol-cytochrome c reductase complex (complex III or cytochrome b-c1 complex) that is part of the mitochondrial respiratory chain. The b-c1 complex mediates electron transfer from ubiquinol to cytochrome c. Contributes to the generation of a proton gradient across the mitochondrial membrane that is then used for ATP synthesis. The polypeptide is Cytochrome b (COB) (Mycena viridimarginata).